Reading from the N-terminus, the 390-residue chain is Succinate--CoA ligase [ADP-forming] subunit beta (390 aa).

In terms of domain architecture, ATP-grasp spans 9–244 (KEIFREYGVP…LSEEDPVEVE (236 aa)). ATP-binding positions include Lys46, 53 to 55 (GRG), Glu99, Ala102, and Glu107. Mg(2+) is bound by residues Asn199 and Asp213. Substrate is bound by residues Asn264 and 321 to 323 (GIV).

The protein belongs to the succinate/malate CoA ligase beta subunit family. Heterotetramer of two alpha and two beta subunits. Mg(2+) is required as a cofactor.

The catalysed reaction is succinate + ATP + CoA = succinyl-CoA + ADP + phosphate. The enzyme catalyses GTP + succinate + CoA = succinyl-CoA + GDP + phosphate. The protein operates within carbohydrate metabolism; tricarboxylic acid cycle; succinate from succinyl-CoA (ligase route): step 1/1. In terms of biological role, succinyl-CoA synthetase functions in the citric acid cycle (TCA), coupling the hydrolysis of succinyl-CoA to the synthesis of either ATP or GTP and thus represents the only step of substrate-level phosphorylation in the TCA. The beta subunit provides nucleotide specificity of the enzyme and binds the substrate succinate, while the binding sites for coenzyme A and phosphate are found in the alpha subunit. This chain is Succinate--CoA ligase [ADP-forming] subunit beta, found in Nitratiruptor sp. (strain SB155-2).